The sequence spans 451 residues: UPF0210 protein NMCC_1554 (451 aa).

The protein belongs to the UPF0210 family. Homodimer.

The sequence is that of UPF0210 protein NMCC_1554 from Neisseria meningitidis serogroup C (strain 053442).